Consider the following 187-residue polypeptide: UPF0301 protein VF_0434 (187 aa).

It belongs to the UPF0301 (AlgH) family.

This is UPF0301 protein VF_0434 from Aliivibrio fischeri (strain ATCC 700601 / ES114) (Vibrio fischeri).